The chain runs to 421 residues: CinA-like protein (421 aa).

The protein belongs to the CinA family.

This chain is CinA-like protein, found in Synechococcus elongatus (strain ATCC 33912 / PCC 7942 / FACHB-805) (Anacystis nidulans R2).